A 79-amino-acid polypeptide reads, in one-letter code: Conotoxin MIVA (79 aa).

A signal peptide spans 1–21 (MGMRMMFTVFLLVVLATTVVS). The propeptide occupies 22–38 (IPSDRASDGRNAVVHER). Proline 40 is subject to 4-hydroxyproline. Glutamate 41 is modified (4-carboxyglutamate). Residues threonine 45 and threonine 47 are each glycosylated (O-linked (HexNAc...) threonine). Proline 55, proline 60, proline 61, proline 69, proline 70, and proline 74 each carry 4-hydroxyproline. Proline 74 is modified (proline amide). Residues 75 to 79 (GRRND) constitute a propeptide that is removed on maturation.

In terms of processing, O-linked glycan consists of Hex4-HexNAc2 hexasaccharide. Contains 3 disulfide bonds. In terms of tissue distribution, expressed by the venom duct.

Its subcellular location is the secreted. Functionally, probable neurotoxin with ion channel inhibitor activity. The sequence is that of Conotoxin MIVA from Conus magus (Magical cone).